We begin with the raw amino-acid sequence, 377 residues long: MKFEKLGQSGRARRGRLTLEHGVVETPIFMPVGTYGTVKGMLPRDIEDIQAQIILGNTFHLYLRPGLEVIKQHGGLHDFIKWNKPILTDSGGFQVFSLGAMRKIKEEGVTFRSPIDGSKVFLSPEISMEIQHVLNSDIVMIFDECTPYPATHEEAQKSLQLSLRWAKRCKAHHHDELKNKNALFGIIQGGMYEDLRDESLNGLLEIGFDGYAIGGLSVGEPKEEMIKVLDYLPNKMPHDKPRYLMGVGKPEDIVEAVRRGVDMFDCVMPTRNARNGHYFVTDGLVRIRNSKYRHDQGPLDPHCDCYTCKNFTRAYLFHLEKCGEMLASMLGTIHNLRYYQRLTEGMRDALDKGTFDEFVQDFYARRGLEVPPCPVDE.

Asp89 functions as the Proton acceptor in the catalytic mechanism. Substrate contacts are provided by residues 89-93 (DSGGF), Asp143, Gln188, and Gly215. Positions 246 to 252 (GVGKPED) are RNA binding. Asp265 functions as the Nucleophile in the catalytic mechanism. The interval 270–274 (TRNAR) is RNA binding; important for wobble base 34 recognition. Positions 303, 305, 308, and 334 each coordinate Zn(2+).

This sequence belongs to the queuine tRNA-ribosyltransferase family. As to quaternary structure, homodimer. Within each dimer, one monomer is responsible for RNA recognition and catalysis, while the other monomer binds to the replacement base PreQ1. The cofactor is Zn(2+).

It carries out the reaction 7-aminomethyl-7-carbaguanine + guanosine(34) in tRNA = 7-aminomethyl-7-carbaguanosine(34) in tRNA + guanine. It participates in tRNA modification; tRNA-queuosine biosynthesis. Its function is as follows. Catalyzes the base-exchange of a guanine (G) residue with the queuine precursor 7-aminomethyl-7-deazaguanine (PreQ1) at position 34 (anticodon wobble position) in tRNAs with GU(N) anticodons (tRNA-Asp, -Asn, -His and -Tyr). Catalysis occurs through a double-displacement mechanism. The nucleophile active site attacks the C1' of nucleotide 34 to detach the guanine base from the RNA, forming a covalent enzyme-RNA intermediate. The proton acceptor active site deprotonates the incoming PreQ1, allowing a nucleophilic attack on the C1' of the ribose to form the product. After dissociation, two additional enzymatic reactions on the tRNA convert PreQ1 to queuine (Q), resulting in the hypermodified nucleoside queuosine (7-(((4,5-cis-dihydroxy-2-cyclopenten-1-yl)amino)methyl)-7-deazaguanosine). This Acinetobacter baumannii (strain SDF) protein is Queuine tRNA-ribosyltransferase.